A 543-amino-acid polypeptide reads, in one-letter code: tRNA (guanine(37)-N(1))-methyltransferase (543 aa).

Residues 1 to 59 (MLKSLCFVIRPAIVSRPQFRLPTIARLSLRQFQNQPQSVGFFTMAPLETRALALSPSAT) constitute a mitochondrion transit peptide. S-adenosyl-L-methionine-binding positions include His282, 320-321 (DL), and 348-349 (DG). Positions 366 to 405 (DPAPPPKVSNRQRDREAKEARRKREQAKAAGQPVTETAPM) are disordered. Asn431 provides a ligand contact to S-adenosyl-L-methionine.

Belongs to the class I-like SAM-binding methyltransferase superfamily. TRM5/TYW2 family. Monomer.

Its subcellular location is the mitochondrion matrix. It localises to the nucleus. The protein localises to the cytoplasm. It catalyses the reaction guanosine(37) in tRNA + S-adenosyl-L-methionine = N(1)-methylguanosine(37) in tRNA + S-adenosyl-L-homocysteine + H(+). Its function is as follows. Specifically methylates the N1 position of guanosine-37 in various cytoplasmic and mitochondrial tRNAs. Methylation is not dependent on the nature of the nucleoside 5' of the target nucleoside. This is the first step in the biosynthesis of wybutosine (yW), a modified base adjacent to the anticodon of tRNAs and required for accurate decoding. This is tRNA (guanine(37)-N(1))-methyltransferase from Cryptococcus neoformans var. neoformans serotype D (strain JEC21 / ATCC MYA-565) (Filobasidiella neoformans).